Here is a 297-residue protein sequence, read N- to C-terminus: HTH-type transcriptional regulator ArgP (297 aa).

The HTH lysR-type domain maps to 4-60 (PDYRTLQALDAVIRERGFERAAQKLCITQSAVSQRIKQLENMFGQPLLVRTVPPRPT). A DNA-binding region (H-T-H motif) is located at residues 21–40 (FERAAQKLCITQSAVSQRIK).

The protein belongs to the LysR transcriptional regulatory family. In terms of assembly, homodimer.

Controls the transcription of genes involved in arginine and lysine metabolism. In Salmonella choleraesuis (strain SC-B67), this protein is HTH-type transcriptional regulator ArgP.